Here is a 468-residue protein sequence, read N- to C-terminus: Glutamate--tRNA ligase (468 aa).

Residues 8 to 18 (PSPTGFLHVGG) carry the 'HIGH' region motif. Residues C97, C99, C124, and D126 each contribute to the Zn(2+) site. Residues 236 to 240 (KLSKR) carry the 'KMSKS' region motif. Position 239 (K239) interacts with ATP.

Belongs to the class-I aminoacyl-tRNA synthetase family. Glutamate--tRNA ligase type 1 subfamily. Monomer. Zn(2+) serves as cofactor.

Its subcellular location is the cytoplasm. It catalyses the reaction tRNA(Glu) + L-glutamate + ATP = L-glutamyl-tRNA(Glu) + AMP + diphosphate. Functionally, catalyzes the attachment of glutamate to tRNA(Glu) in a two-step reaction: glutamate is first activated by ATP to form Glu-AMP and then transferred to the acceptor end of tRNA(Glu). In Francisella tularensis subsp. novicida (strain U112), this protein is Glutamate--tRNA ligase.